The following is a 272-amino-acid chain: R-spondin-3 (272 aa).

A signal peptide spans 1 to 21; it reads MHLRLISWLFIILNFMEYIGS. 2 FU repeats span residues 35–86 and 92–135; these read PNVS…GYYG and INKC…GLEA. Residue asparagine 36 is glycosylated (N-linked (GlcNAc...) asparagine). 11 disulfides stabilise this stretch: cysteine 41–cysteine 48, cysteine 45–cysteine 54, cysteine 57–cysteine 76, cysteine 80–cysteine 95, cysteine 98–cysteine 105, cysteine 102–cysteine 111, cysteine 114–cysteine 125, cysteine 129–cysteine 142, cysteine 148–cysteine 190, cysteine 159–cysteine 166, and cysteine 199–cysteine 206. The region spanning 147–207 is the TSP type-1 domain; that stretch reads HCEVSEWNPW…KCTVQRKKCQ (61 aa). Residues 201–272 form a disordered region; the sequence is VQRKKCQKGE…QKSVSVSTVH (72 aa). Positions 213 to 223 are enriched in basic residues; that stretch reads KKGRERKRKKP. A compositionally biased stretch (basic and acidic residues) spans 224–252; sequence NKGESKEAIPDSKSLESSKEIPEQRENKQ.

Belongs to the R-spondin family. As to quaternary structure, interacts with the extracellular domain of FZD8 and LRP6. It however does not form a ternary complex with FZD8 and LRP6. Interacts with WNT1. Binds heparin. Interacts with LGR4, LGR5 and LGR6. Ubiquitously expressed. Expressed at higher level in placenta, small intestine, fetal thymus and lymph node. Highly expressed in endothelial cells.

The protein localises to the secreted. Its function is as follows. Activator of the canonical Wnt signaling pathway by acting as a ligand for LGR4-6 receptors, which acts as a key regulator of angiogenesis. Upon binding to LGR4-6 (LGR4, LGR5 or LGR6), LGR4-6 associate with phosphorylated LRP6 and frizzled receptors that are activated by extracellular Wnt receptors, triggering the canonical Wnt signaling pathway to increase expression of target genes. Also regulates the canonical Wnt/beta-catenin-dependent pathway and non-canonical Wnt signaling by acting as an inhibitor of ZNRF3, an important regulator of the Wnt signaling pathway. Acts as a ligand for frizzled FZD8 and LRP6. May negatively regulate the TGF-beta pathway. Acts as a key regulator of angiogenesis by controlling vascular stability and pruning: acts by activating the non-canonical Wnt signaling pathway in endothelial cells. Can also amplify Wnt signaling pathway independently of LGR4-6 receptors, possibly by acting as a direct antagonistic ligand to RNF43 and ZNRF3. This Homo sapiens (Human) protein is R-spondin-3 (RSPO3).